The sequence spans 319 residues: Phosphoenolpyruvate transferase (319 aa).

Position 50 (Asp-50) interacts with 7,8-didemethyl-8-hydroxy-5-deazariboflavin.

This sequence belongs to the CofD family. In terms of assembly, homodimer. Requires Mg(2+) as cofactor.

It carries out the reaction enolpyruvoyl-2-diphospho-5'-guanosine + 7,8-didemethyl-8-hydroxy-5-deazariboflavin = dehydro coenzyme F420-0 + GMP + H(+). The protein operates within cofactor biosynthesis; coenzyme F420 biosynthesis. Functionally, catalyzes the transfer of the phosphoenolpyruvate moiety from enoylpyruvoyl-2-diphospho-5'-guanosine (EPPG) to 7,8-didemethyl-8-hydroxy-5-deazariboflavin (FO) with the formation of dehydro coenzyme F420-0 and GMP. The polypeptide is Phosphoenolpyruvate transferase (Streptomyces avermitilis (strain ATCC 31267 / DSM 46492 / JCM 5070 / NBRC 14893 / NCIMB 12804 / NRRL 8165 / MA-4680)).